The sequence spans 287 residues: Beta-lactamase GES-5 (287 aa).

The first 18 residues, 1-18 (MRFIHALLLAGIAHSAYA), serve as a signal peptide directing secretion. Residues Cys-63 and Cys-233 are joined by a disulfide bond. The active-site Nucleophile; acyl-ester intermediate is the Ser-64. Positions 64, 125, 127, 230, 232, and 238 each coordinate imipenem.

It belongs to the class-A beta-lactamase family.

The protein resides in the secreted. The catalysed reaction is a beta-lactam + H2O = a substituted beta-amino acid. Inhibited by the beta-lactamase-blocking agents clavulanic acid, sulbactam and tazobactam, via a covalent binding to Ser-64. Its function is as follows. Confers resistance to penicillins, cephalosporins and carbapenems. Has carbapenem-hydrolyzing activity. The sequence is that of Beta-lactamase GES-5 from Klebsiella pneumoniae.